The following is a 125-amino-acid chain: Neuraminyllactose-binding hemagglutinin (125 aa).

The tract at residues 92-97 (KRTTQK) is N-acetyl-neuraminyl-alpha(2,3)-lactose binding motif.

It is found in the cell outer membrane. In Helicobacter acinonychis (Helicobacter acinonyx), this protein is Neuraminyllactose-binding hemagglutinin (hpaA).